Consider the following 168-residue polypeptide: Ribosome maturation factor RimM (168 aa).

The PRC barrel domain maps to 96 to 168 (EGDYYWTDLI…IIVVEWDADF (73 aa)).

This sequence belongs to the RimM family. Binds ribosomal protein uS19.

Its subcellular location is the cytoplasm. Functionally, an accessory protein needed during the final step in the assembly of 30S ribosomal subunit, possibly for assembly of the head region. Essential for efficient processing of 16S rRNA. May be needed both before and after RbfA during the maturation of 16S rRNA. It has affinity for free ribosomal 30S subunits but not for 70S ribosomes. This chain is Ribosome maturation factor RimM, found in Coxiella burnetii (strain Dugway 5J108-111).